Here is a 354-residue protein sequence, read N- to C-terminus: UDP-N-acetylglucosamine--N-acetylmuramyl-(pentapeptide) pyrophosphoryl-undecaprenol N-acetylglucosamine transferase (354 aa).

UDP-N-acetyl-alpha-D-glucosamine is bound by residues serine 196 and glutamine 288.

The protein belongs to the glycosyltransferase 28 family. MurG subfamily.

It localises to the cell membrane. It carries out the reaction Mur2Ac(oyl-L-Ala-gamma-D-Glu-L-Lys-D-Ala-D-Ala)-di-trans,octa-cis-undecaprenyl diphosphate + UDP-N-acetyl-alpha-D-glucosamine = beta-D-GlcNAc-(1-&gt;4)-Mur2Ac(oyl-L-Ala-gamma-D-Glu-L-Lys-D-Ala-D-Ala)-di-trans,octa-cis-undecaprenyl diphosphate + UDP + H(+). It functions in the pathway cell wall biogenesis; peptidoglycan biosynthesis. Cell wall formation. Catalyzes the transfer of a GlcNAc subunit on undecaprenyl-pyrophosphoryl-MurNAc-pentapeptide (lipid intermediate I) to form undecaprenyl-pyrophosphoryl-MurNAc-(pentapeptide)GlcNAc (lipid intermediate II). The sequence is that of UDP-N-acetylglucosamine--N-acetylmuramyl-(pentapeptide) pyrophosphoryl-undecaprenol N-acetylglucosamine transferase from Streptococcus suis (strain 98HAH33).